The primary structure comprises 30 residues: 80 kDa carcinoembryonic antigen-binding protein (30 aa).

As to quaternary structure, binds to carcinoembryonic antigen (CEA). Post-translationally, the N-terminus is blocked.

The protein resides in the cell membrane. May play a role in the development of hepatic metastases from colorectal cancers. This Rattus norvegicus (Rat) protein is 80 kDa carcinoembryonic antigen-binding protein.